Consider the following 499-residue polypeptide: Dipeptide and tripeptide permease A (499 aa).

Topologically, residues 1 to 34 (MSTANKKPAESVSMNAFKQPRSFYLIFSIELWER) are cytoplasmic. Residues 35-55 (FGFYGLQGIMAVYLVKQLGMS) form a helical membrane-spanning segment. At 56-59 (EADS) the chain is on the periplasmic side. Residues 60–80 (ITLFSSFSALVYGLVAIGGWL) traverse the membrane as a helical segment. The Cytoplasmic portion of the chain corresponds to 81–89 (GDKVLGTKR). Residues 90-110 (VIMLGTIVLAIGYALVAWSGH) form a helical membrane-spanning segment. Residue aspartate 111 is a topological domain, periplasmic. A helical transmembrane segment spans residues 112 to 132 (AAIVYFGMATIAVGNGLFKAN). Residues 133–153 (PSALLSTCYEKDDPRLDGAFT) are Cytoplasmic-facing. Residues 154 to 174 (MYYMAINIGSFFSMLATPWLA) form a helical membrane-spanning segment. Residues 175 to 178 (EKFG) lie on the Periplasmic side of the membrane. Residues 179-199 (WSVAFSLSFVGMLITLVNFIF) traverse the membrane as a helical segment. The Cytoplasmic segment spans residues 200–217 (CKKWVKDYGSKPDFAPLH). The helical transmembrane segment at 218–238 (VGKLLATIVGIVVLVAIATWL) threads the bilayer. Topologically, residues 239-246 (LHNQGIAR) are periplasmic. A helical transmembrane segment spans residues 247–267 (LVLGVVALGIVIIFAKEAFAM). Over 268–274 (QGAARRK) the chain is Cytoplasmic. The helical transmembrane segment at 275–295 (MIVAFILMLEAIVFFVLYQQM) threads the bilayer. Residues 296 to 320 (PTSLNFFAIRNVEHSILGIAFQPEQ) are Periplasmic-facing. Residues 321–341 (FQALNPFWIMIGSPILAAIYN) traverse the membrane as a helical segment. The Cytoplasmic portion of the chain corresponds to 342-350 (KMGDRLPMP). The helical transmembrane segment at 351–371 (FKFTIGMLLCSGAFLVLPLGA) threads the bilayer. The Periplasmic portion of the chain corresponds to 372 to 383 (KFASEAGIVSVN). A helical transmembrane segment spans residues 384–404 (WLILSYALQSIGELMISGLGL). The Cytoplasmic segment spans residues 405–414 (AMVAQLVPQR). The chain crosses the membrane as a helical span at residues 415–435 (LMGFIMGSWFLTTAGAAMIAG). The Periplasmic portion of the chain corresponds to 436 to 459 (KVANLMAVPENVSDPLQSLEVYGR). The chain crosses the membrane as a helical span at residues 460–480 (VFMQIGIATGVIAVLMLLTAP). Topologically, residues 481-499 (LLNRMTQEDKPKETDTAHA) are cytoplasmic.

This sequence belongs to the major facilitator superfamily. Proton-dependent oligopeptide transporter (POT/PTR) (TC 2.A.17) family. DtpA subfamily.

It is found in the cell inner membrane. In terms of biological role, proton-dependent permease that transports di- and tripeptides. The protein is Dipeptide and tripeptide permease A of Cronobacter turicensis (strain DSM 18703 / CCUG 55852 / LMG 23827 / z3032).